We begin with the raw amino-acid sequence, 350 residues long: Bifunctional UDP-glucose 4-epimerase and UDP-xylose 4-epimerase 1 (350 aa).

NAD(+) is bound by residues 15 to 17 (GFI), 36 to 40 (DNFDN), 67 to 68 (DL), F89, and K93. A substrate-binding site is contributed by S133. The active-site Proton acceptor is the Y157. NAD(+)-binding residues include K161 and Y185.

Belongs to the NAD(P)-dependent epimerase/dehydratase family. It depends on NAD(+) as a cofactor.

The catalysed reaction is UDP-alpha-D-glucose = UDP-alpha-D-galactose. It carries out the reaction UDP-beta-L-arabinopyranose = UDP-alpha-D-xylose. It functions in the pathway carbohydrate metabolism; galactose metabolism. Its pathway is nucleotide-sugar biosynthesis; UDP-L-arabinose biosynthesis; UDP-L-arabinose from UDP-alpha-D-xylose: step 1/1. The protein operates within cell wall biogenesis; cell wall polysaccharide biosynthesis. With respect to regulation, inhibited by Hg(2+). Its function is as follows. Catalyzes the interconversion between UDP-glucose and UDP-galactose and the interconversion between UDP-arabinose and UDP-xylose. The sequence is that of Bifunctional UDP-glucose 4-epimerase and UDP-xylose 4-epimerase 1 from Pisum sativum (Garden pea).